The primary structure comprises 325 residues: MAIDFKQDILAPVAQDFAAMDQFINEGISSKVALVMSVSKHVVEAGGKRMRPIMCLLAAYACGETNLKHAQKLAAIIEMLHTATLVHDDVVDESGLRRGRPTANATWNNQTAVLVGDFLIARAFDLLVDLDNMILLKDFSTGTCEIAEGEVLQLQAQHQPDTTEDIYLQIIHGKTSRLFELATEGAAILAGKPEYREPLRRFAGHFGNAFQIIDDILDYTSDADTLGKNIGDDLMEGKPTLPLIAAMQNTQGEQRDLIRRSIATGGTSQLEQVIAIVQNSGALDYCHKRATEETERALQALEILPESTYRQALVNLTRLALDRIQ.

3 residues coordinate isopentenyl diphosphate: Lys48, Arg51, and His81. Asp88 and Asp92 together coordinate Mg(2+). Arg97 contributes to the an all-trans-polyprenyl diphosphate binding site. Arg98 is a binding site for isopentenyl diphosphate. Residues Lys174, Thr175, Gln211, and Lys228 each contribute to the an all-trans-polyprenyl diphosphate site.

Belongs to the FPP/GGPP synthase family. In terms of assembly, homodimer. Mg(2+) serves as cofactor.

The enzyme catalyses 7 isopentenyl diphosphate + (2E)-geranyl diphosphate = all-trans-nonaprenyl diphosphate + 7 diphosphate. In terms of biological role, catalyzes the sequential condensation of isopentenyl diphosphate (IPP) with the allylic substrate to give solanesyl diphosphate. Could be important to determine the side chain length of ubiquinone. The protein is All-trans-nonaprenyl-diphosphate synthase (geranyl-diphosphate specific) (sdsA) of Rhodobacter capsulatus (Rhodopseudomonas capsulata).